A 315-amino-acid chain; its full sequence is MTPTVKCPVAILGSGDVGTDLMMKILRSDGPLTVGALVGLDPEPGGLARAERLGVPTSAAGIDGLPAMPEFGDIGIVFDATPAGAPRAELEKAGVCVLDLNPAVVGPHCVPAVNLEDHLDTPNLNLVTGAGQATVPIVAAVGRVGAVSYAETVTSVAAKSADPATRANIDESIETTTAALRTVGGARRARSIFIINPADPPILMRNTVYCLVDGDVPRGDIEQSIAAMVERVTSYVPGYRLKQRVQFETFTATDPLHIPETGGFTGTRVTVLVEVTAGEPHLPGYAGNLEMMTSAAKAAAERIALHRSRTAGAAT.

NAD(+)-binding positions include 14-17 (SGDV) and N288.

Belongs to the acetaldehyde dehydrogenase family.

The sequence is that of Probable inactive acetaldehyde dehydrogenase 1 from Mycolicibacterium vanbaalenii (strain DSM 7251 / JCM 13017 / BCRC 16820 / KCTC 9966 / NRRL B-24157 / PYR-1) (Mycobacterium vanbaalenii).